The primary structure comprises 385 residues: T-box transcription factor TBX10 (385 aa).

A DNA-binding region (T-box) is located at residues 69-252 (LEMKPLWEEF…SNPFAKGFRE (184 aa)). 2 disordered regions span residues 283-310 (GSAE…NQLL) and 328-359 (QNLY…AGDQ). Residues 293–307 (KASASSSRTPTQPHN) show a composition bias toward polar residues. The span at 331–347 (YPGSPSRAGPPRARLAP) shows a compositional bias: low complexity.

Its subcellular location is the nucleus. Functionally, probable transcriptional regulator involved in developmental processes. The sequence is that of T-box transcription factor TBX10 (Tbx10) from Mus musculus (Mouse).